We begin with the raw amino-acid sequence, 448 residues long: Tubulin beta chain (448 aa).

GTP contacts are provided by Gln-11, Glu-69, Ser-138, Gly-142, Thr-143, Gly-144, Asn-204, and Asn-226. Residue Glu-69 participates in Mg(2+) binding. A disordered region spans residues 426–448; the sequence is QDAGIDEEEEEYEEEAPVDEPLE. Residues 429-448 show a composition bias toward acidic residues; the sequence is GIDEEEEEYEEEAPVDEPLE.

Belongs to the tubulin family. Dimer of alpha and beta chains. A typical microtubule is a hollow water-filled tube with an outer diameter of 25 nm and an inner diameter of 15 nM. Alpha-beta heterodimers associate head-to-tail to form protofilaments running lengthwise along the microtubule wall with the beta-tubulin subunit facing the microtubule plus end conferring a structural polarity. Microtubules usually have 13 protofilaments but different protofilament numbers can be found in some organisms and specialized cells. Mg(2+) serves as cofactor.

Its subcellular location is the cytoplasm. It is found in the cytoskeleton. Its function is as follows. Tubulin is the major constituent of microtubules, a cylinder consisting of laterally associated linear protofilaments composed of alpha- and beta-tubulin heterodimers. Microtubules grow by the addition of GTP-tubulin dimers to the microtubule end, where a stabilizing cap forms. Below the cap, tubulin dimers are in GDP-bound state, owing to GTPase activity of alpha-tubulin. The chain is Tubulin beta chain (TUB2) from Epichloe coenophiala (Tall fescue endophyte fungus).